The primary structure comprises 180 residues: Large ribosomal subunit protein uL6 (180 aa).

The protein belongs to the universal ribosomal protein uL6 family. In terms of assembly, part of the 50S ribosomal subunit.

This protein binds to the 23S rRNA, and is important in its secondary structure. It is located near the subunit interface in the base of the L7/L12 stalk, and near the tRNA binding site of the peptidyltransferase center. This chain is Large ribosomal subunit protein uL6, found in Borrelia duttonii (strain Ly).